The primary structure comprises 146 residues: uncharacterized protein (146 aa).

The chain crosses the membrane as a helical span at residues 7-27 (FVLSITIVLVILIIIAFIWYN).

It belongs to the asfivirus E146L family.

It localises to the host membrane. Its subcellular location is the virion. This is an uncharacterized protein from African swine fever virus (strain Badajoz 1971 Vero-adapted) (Ba71V).